The following is an 830-amino-acid chain: Leucine--tRNA ligase (830 aa).

The 'HIGH' region motif lies at 42 to 52 (PYPSGNLHMGH). The 'KMSKS' region motif lies at 585-589 (KMSKS). Residue Lys-588 coordinates ATP.

Belongs to the class-I aminoacyl-tRNA synthetase family.

The protein localises to the cytoplasm. It catalyses the reaction tRNA(Leu) + L-leucine + ATP = L-leucyl-tRNA(Leu) + AMP + diphosphate. This chain is Leucine--tRNA ligase, found in Halothermothrix orenii (strain H 168 / OCM 544 / DSM 9562).